Consider the following 347-residue polypeptide: NADH-ubiquinone oxidoreductase chain 2 (347 aa).

11 helical membrane passes run 1-21, 25-45, 59-79, 96-116, 122-142, 145-165, 178-198, 200-220, 242-262, 274-294, and 325-345; these read MNPL…SIIL, HWFM…PVLM, YFLT…INLM, LLIT…FWVP, VSLQ…LAVM, IFAS…IMIG, IMAY…IYNP, LMLL…MMFM, VLMM…GFMP, NSVI…FFYM, and LLAP…MFIL.

Belongs to the complex I subunit 2 family. Core subunit of respiratory chain NADH dehydrogenase (Complex I) which is composed of 45 different subunits. Interacts with TMEM242.

The protein resides in the mitochondrion inner membrane. The catalysed reaction is a ubiquinone + NADH + 5 H(+)(in) = a ubiquinol + NAD(+) + 4 H(+)(out). Core subunit of the mitochondrial membrane respiratory chain NADH dehydrogenase (Complex I) which catalyzes electron transfer from NADH through the respiratory chain, using ubiquinone as an electron acceptor. Essential for the catalytic activity and assembly of complex I. The protein is NADH-ubiquinone oxidoreductase chain 2 of Myosorex kihaulei (Kihaule's mouse shrew).